Here is a 318-residue protein sequence, read N- to C-terminus: Probable cell division protein WhiA (318 aa).

Residues 281–314 constitute a DNA-binding region (H-T-H motif); the sequence is SLKELGEMLSPPVGKSGVNHRLRRIEKIAEELSK.

Belongs to the WhiA family.

Functionally, involved in cell division and chromosome segregation. This chain is Probable cell division protein WhiA, found in Clostridium tetani (strain Massachusetts / E88).